Here is a 331-residue protein sequence, read N- to C-terminus: Ornithine carbamoyltransferase (331 aa).

Carbamoyl phosphate is bound by residues 55–58, Gln-82, Arg-106, and 133–136; these read STRT and HPTQ. Residues Asn-166, Asp-230, and 234–235 contribute to the L-ornithine site; that span reads SM. Carbamoyl phosphate is bound by residues 272-273 and Arg-317; that span reads CL.

Belongs to the aspartate/ornithine carbamoyltransferase superfamily. OTCase family.

It is found in the cytoplasm. The catalysed reaction is carbamoyl phosphate + L-ornithine = L-citrulline + phosphate + H(+). Its pathway is amino-acid biosynthesis; L-arginine biosynthesis; L-arginine from L-ornithine and carbamoyl phosphate: step 1/3. Reversibly catalyzes the transfer of the carbamoyl group from carbamoyl phosphate (CP) to the N(epsilon) atom of ornithine (ORN) to produce L-citrulline. The protein is Ornithine carbamoyltransferase of Neisseria meningitidis serogroup C / serotype 2a (strain ATCC 700532 / DSM 15464 / FAM18).